Consider the following 251-residue polypeptide: Protein unc-119 homolog B (251 aa).

The tract at residues Met-1–Lys-28 is disordered. Position 2 is an N-acetylserine (Ser-2). Position 24 is an N6-acetyllysine (Lys-24). Tyr-142 serves as a coordination point for tetradecanoate.

This sequence belongs to the PDE6D/unc-119 family. In terms of assembly, found in a complex with ARL3, RP2 and UNC119B; RP2 induces hydrolysis of GTP ARL3 in the complex, leading to the release of UNC119B. Interacts with NPHP3 (when myristoylated). Interacts with CYS1 (when myristoylated). Interacts with MACIR; interaction only takes place when UNC119B is not liganded with myristoylated proteins.

It is found in the cell projection. The protein resides in the cilium. In terms of biological role, myristoyl-binding protein that acts as a cargo adapter: specifically binds the myristoyl moiety of a subset of N-terminally myristoylated proteins and is required for their localization. Binds myristoylated NPHP3 and plays a key role in localization of NPHP3 to the primary cilium membrane. Does not bind all myristoylated proteins. Probably plays a role in trafficking proteins in photoreceptor cells. This Homo sapiens (Human) protein is Protein unc-119 homolog B (UNC119B).